We begin with the raw amino-acid sequence, 204 residues long: Large ribosomal subunit protein eL15 (204 aa).

The protein belongs to the eukaryotic ribosomal protein eL15 family. Component of the large ribosomal subunit.

It is found in the cytoplasm. Component of the large ribosomal subunit. The ribosome is a large ribonucleoprotein complex responsible for the synthesis of proteins in the cell. In Tachysurus fulvidraco (Yellow catfish), this protein is Large ribosomal subunit protein eL15 (rpl15).